Here is a 341-residue protein sequence, read N- to C-terminus: Anthranilate phosphoribosyltransferase (341 aa).

5-phospho-alpha-D-ribose 1-diphosphate-binding positions include Gly-84, 94-97 (NVST), 112-120 (KHGGRAASS), and Ser-124. An anthranilate-binding site is contributed by Gly-84. Ser-96 provides a ligand contact to Mg(2+). Arg-170 contributes to the anthranilate binding site. 2 residues coordinate Mg(2+): Asp-229 and Glu-230.

The protein belongs to the anthranilate phosphoribosyltransferase family. In terms of assembly, homodimer. Mg(2+) serves as cofactor.

It catalyses the reaction N-(5-phospho-beta-D-ribosyl)anthranilate + diphosphate = 5-phospho-alpha-D-ribose 1-diphosphate + anthranilate. The protein operates within amino-acid biosynthesis; L-tryptophan biosynthesis; L-tryptophan from chorismate: step 2/5. Its function is as follows. Catalyzes the transfer of the phosphoribosyl group of 5-phosphorylribose-1-pyrophosphate (PRPP) to anthranilate to yield N-(5'-phosphoribosyl)-anthranilate (PRA). The sequence is that of Anthranilate phosphoribosyltransferase from Methylobacillus flagellatus (strain ATCC 51484 / DSM 6875 / VKM B-1610 / KT).